A 303-amino-acid polypeptide reads, in one-letter code: Thioesterase poxG (303 aa).

This sequence belongs to the lcsJ thioesterase family.

It participates in secondary metabolite biosynthesis. In terms of biological role, thioesterase; part of the gene cluster that mediates the biosynthesis of oxaleimides, cytotoxic compounds containing an unusual disubstituted succinimide moiety. The first step of the pathway is provided by the HR-PKS poxF that serves in a new mode of collaborative biosynthesis with the PKS-NRPS poxE, by providing the olefin containing amino acid substrate via the synthesis of an ACP-bound dec-4-enoate. The cytochrome P450 monooxygenase poxM-catalyzed oxidation at the alpha-position creates the enzyme-bound 2-hydroxydec-4-enoyl-ACP thioester, which may be prone to spontaneous hydrolysis to yield 2-hydroxydec-4-enoic acid due to increased electrophilicity of the carbonyl. 2-hydroxydec-4-enoic acid can then be further oxidized by poxM to yield the alpha-ketoacid 2-oxodec-4-enoicacid, which is reductively aminated by the aminotransferase poxL to yield (S,E)-2-aminodec-4-enoic acid. The Hybrid PKS-NRPS synthetase poxE then performs condensation between the octaketide product of its PKS modules and the amino group of (S,E)-2-aminodec-4-enoic acid which is activated and incorporated by the adenylation domain. The resulting aminoacyl product can be cyclized by the Diels-Alderase PoxQ and reductively released by the reductive (R) domain of poxE to yield an aldehyde intermediate. The released aldehyde is then substrate for a Knoevenagel condensation by the hydrolyase poxO followed by an oxidation at the 5-position of the pyrrolidone ring. The presence of the olefin from the amino acid building block allows for migration of the substituted allyl group to occur. This allylic transposition reaction takes place in a conjugate addition, semipinacol-like fashion to yield a succinimide intermediate. Iterative two-electron oxidations of the C7 methyl of the succinimide intermediate to the carboxylic acid can be catalyzed by one of two remaining cytochrome P450 monooxygenasess poxC or poxD to yield oxaleimide A. Subsequent oxidation yields the maleimide scaffold oxaleimide I. Both oxaleimide A and oxaleimide I can undergo oxidative modifications in the decalin ring to yield the series of products oxaleimides B to H. The protein is Thioesterase poxG of Penicillium oxalicum (strain 114-2 / CGMCC 5302) (Penicillium decumbens).